The sequence spans 898 residues: Serine/threonine-protein kinase TAO3 (898 aa).

The Protein kinase domain occupies 24-277; sequence FIGLHEIGHG…SAELLRHDFV (254 aa). Residues 30-38 and Lys53 each bind ATP; that span reads IGHGSFGAV. Catalysis depends on Asp147, which acts as the Proton acceptor. Disordered stretches follow at residues 316–362 and 405–425; these read TRNG…SQSS and DEAG…VQSQ. Phosphoserine; by ATM is present on Ser324. Phosphoserine is present on residues Ser331, Ser343, Ser346, and Ser349. Polar residues predominate over residues 334–351; it reads GTSLNREMDSLGSNHSIP. A compositionally biased stretch (low complexity) spans 352 to 362; the sequence is SMSVSTGSQSS. At Thr357 the chain carries Phosphothreonine. Ser359 bears the Phosphoserine mark. A compositionally biased stretch (basic and acidic residues) spans 405 to 416; sequence DEAGHGDPRPEP. The residue at position 442 (Ser442) is a Phosphoserine. Coiled coils occupy residues 452–502, 548–649, and 754–879; these read EQEN…THAN, FLES…HAML, and LKTL…DMES. The interval 565 to 596 is disordered; that stretch reads EEMNEDHSTPKKEKQERISKHKENLQHTQAEE. The residue at position 830 (Lys830) is an N6-acetyllysine.

This sequence belongs to the protein kinase superfamily. STE Ser/Thr protein kinase family. STE20 subfamily. In terms of assembly, self-associates. Interacts with ERN1 and TRAF2. Interaction with TRAF2 is facilitated under ER stress conditions, such as treatment with tunicamycin, and may promote TRAF2 phosphorylation. Interacts (via N-terminus) with STK25; the interaction promotes STK25 abundance at the level of protein expression and/or stability. As to quaternary structure, (Microbial infection) Interacts with herpes simplex virus 1 UL37 protein. In terms of processing, autophosphorylated. Phosphorylation at Ser-324 by ATM following DNA damage is required for activation of the p38/MAPK14 stress-activated MAPK cascade. Phosphorylated at Ser-324 and on Tyr residues during T cell activation. Phosphorylated by LRRK2. As to expression, ubiquitously expressed at a low level, and highly expressed in peripheral blood leukocytes (PBLs), thymus, spleen, kidney, skeletal muscle, heart and liver.

It localises to the cytoplasm. The protein resides in the cell membrane. The protein localises to the membrane raft. Its subcellular location is the lipid droplet. The enzyme catalyses L-seryl-[protein] + ATP = O-phospho-L-seryl-[protein] + ADP + H(+). It catalyses the reaction L-threonyl-[protein] + ATP = O-phospho-L-threonyl-[protein] + ADP + H(+). Functionally, serine/threonine-protein kinase that acts as a regulator of the p38/MAPK14 stress-activated MAPK cascade and of the MAPK8/JNK cascade. In response to DNA damage, involved in the G2/M transition DNA damage checkpoint by activating the p38/MAPK14 stress-activated MAPK cascade, probably by mediating phosphorylation of upstream MAP2K3 and MAP2K6 kinases. Inhibits basal activity of the MAPK8/JNK cascade and diminishes its activation in response to epidermal growth factor (EGF). Positively regulates canonical T cell receptor (TCR) signaling by preventing early PTPN6/SHP1-mediated inactivation of LCK, ensuring sustained TCR signaling that is required for optimal activation and differentiation of T cells. Phosphorylates PTPN6/SHP1 on 'Thr-394', leading to its polyubiquitination and subsequent proteasomal degradation. Required for cell surface expression of metalloprotease ADAM10 on type 1 transitional B cells which is necessary for their NOTCH-mediated development into marginal zone B cells. Also required for the NOTCH-mediated terminal differentiation of splenic conventional type 2 dendritic cells. Positively regulates osteoblast differentiation by acting as an upstream activator of the JNK pathway. Promotes JNK signaling in hepatocytes and positively regulates hepatocyte lipid storage by inhibiting beta-oxidation and triacylglycerol secretion while enhancing lipid synthesis. Restricts age-associated inflammation by negatively regulating differentiation of macrophages and their production of pro-inflammatory cytokines. Plays a role in negatively regulating the abundance of regulatory T cells in white adipose tissue. This is Serine/threonine-protein kinase TAO3 (TAOK3) from Homo sapiens (Human).